The primary structure comprises 341 residues: DNA-directed RNA polymerase subunit alpha (341 aa).

The tract at residues Met-1–Glu-233 is alpha N-terminal domain (alpha-NTD). The tract at residues Ile-269–Phe-341 is alpha C-terminal domain (alpha-CTD).

This sequence belongs to the RNA polymerase alpha chain family. In plastids the minimal PEP RNA polymerase catalytic core is composed of four subunits: alpha, beta, beta', and beta''. When a (nuclear-encoded) sigma factor is associated with the core the holoenzyme is formed, which can initiate transcription.

The protein resides in the plastid. The protein localises to the chloroplast. It catalyses the reaction RNA(n) + a ribonucleoside 5'-triphosphate = RNA(n+1) + diphosphate. DNA-dependent RNA polymerase catalyzes the transcription of DNA into RNA using the four ribonucleoside triphosphates as substrates. This Lolium perenne (Perennial ryegrass) protein is DNA-directed RNA polymerase subunit alpha.